We begin with the raw amino-acid sequence, 288 residues long: Light-independent protochlorophyllide reductase iron-sulfur ATP-binding protein (288 aa).

ATP-binding positions include 10-15 (GIGKST) and K39. Residue S14 coordinates Mg(2+). The [4Fe-4S] cluster site is built by C95 and C129. 180–181 (NR) contacts ATP.

The protein belongs to the NifH/BchL/ChlL family. Homodimer. Protochlorophyllide reductase is composed of three subunits; ChlL, ChlN and ChlB. Requires [4Fe-4S] cluster as cofactor.

It localises to the plastid. The protein resides in the chloroplast. It carries out the reaction chlorophyllide a + oxidized 2[4Fe-4S]-[ferredoxin] + 2 ADP + 2 phosphate = protochlorophyllide a + reduced 2[4Fe-4S]-[ferredoxin] + 2 ATP + 2 H2O. Its pathway is porphyrin-containing compound metabolism; chlorophyll biosynthesis (light-independent). Functionally, component of the dark-operative protochlorophyllide reductase (DPOR) that uses Mg-ATP and reduced ferredoxin to reduce ring D of protochlorophyllide (Pchlide) to form chlorophyllide a (Chlide). This reaction is light-independent. The L component serves as a unique electron donor to the NB-component of the complex, and binds Mg-ATP. This Chara vulgaris (Common stonewort) protein is Light-independent protochlorophyllide reductase iron-sulfur ATP-binding protein.